The sequence spans 309 residues: Tagatose-6-phosphate kinase (309 aa).

The protein belongs to the carbohydrate kinase PfkB family. LacC subfamily.

The catalysed reaction is D-tagatofuranose 6-phosphate + ATP = D-tagatofuranose 1,6-bisphosphate + ADP + H(+). It participates in carbohydrate metabolism; D-tagatose 6-phosphate degradation; D-glyceraldehyde 3-phosphate and glycerone phosphate from D-tagatose 6-phosphate: step 1/2. The sequence is that of Tagatose-6-phosphate kinase from Streptococcus pyogenes serotype M28 (strain MGAS6180).